The sequence spans 193 residues: Large ribosomal subunit protein uL18 (193 aa).

Belongs to the universal ribosomal protein uL18 family. Part of the 50S ribosomal subunit. Contacts the 5S and 23S rRNAs.

This is one of the proteins that bind and probably mediate the attachment of the 5S RNA into the large ribosomal subunit, where it forms part of the central protuberance. The protein is Large ribosomal subunit protein uL18 of Methanococcus maripaludis (strain C5 / ATCC BAA-1333).